A 326-amino-acid chain; its full sequence is MNVMMQKVHGSENDFFLLDETQFERSLTAEEIEQLRIQLCSRETGLLAGADGLLLVGEGTHGTSNARMRVINSDGSEASMCGNGLRTVARYLAEKNQEKSFTVETMFADLKVRQAPNLAEEVATYQVEISPVSFEAVTIPMHLGVQTLIDEIVPALSNTIRFTAVAVPNPHLVAFVDHETLNGPEFERIATYVNNENPYFPEGINVSFVEILGKNQLFVRTYERGVGFTSACGTAMCASSLLYTLLKDGVFYEEITVKNTGGMVKTVVHETSDGSYWMELIGNATITHLIEGSLTDLLNGAFEKITITETNEQKHYQEFLQTLSQK.

N13 and N72 together coordinate substrate. C81 serves as the catalytic Proton donor. Substrate is bound by residues 82–83 (GN), N169, N205, and 223–224 (ER). C232 acts as the Proton acceptor in catalysis. 233-234 (GT) is a substrate binding site.

The protein belongs to the diaminopimelate epimerase family. Homodimer.

Its subcellular location is the cytoplasm. It carries out the reaction (2S,6S)-2,6-diaminopimelate = meso-2,6-diaminopimelate. It participates in amino-acid biosynthesis; L-lysine biosynthesis via DAP pathway; DL-2,6-diaminopimelate from LL-2,6-diaminopimelate: step 1/1. Its function is as follows. Catalyzes the stereoinversion of LL-2,6-diaminopimelate (L,L-DAP) to meso-diaminopimelate (meso-DAP), a precursor of L-lysine and an essential component of the bacterial peptidoglycan. The sequence is that of Diaminopimelate epimerase from Enterococcus faecalis (strain ATCC 700802 / V583).